We begin with the raw amino-acid sequence, 195 residues long: Xanthine phosphoribosyltransferase (195 aa).

Xanthine is bound by residues Leu-20 and Asn-27. 128 to 132 lines the 5-phospho-alpha-D-ribose 1-diphosphate pocket; it reads ANGQA. Position 156 (Lys-156) interacts with xanthine.

It belongs to the purine/pyrimidine phosphoribosyltransferase family. Xpt subfamily. Homodimer.

The protein localises to the cytoplasm. The enzyme catalyses XMP + diphosphate = xanthine + 5-phospho-alpha-D-ribose 1-diphosphate. The protein operates within purine metabolism; XMP biosynthesis via salvage pathway; XMP from xanthine: step 1/1. Functionally, converts the preformed base xanthine, a product of nucleic acid breakdown, to xanthosine 5'-monophosphate (XMP), so it can be reused for RNA or DNA synthesis. This chain is Xanthine phosphoribosyltransferase, found in Limosilactobacillus fermentum (strain NBRC 3956 / LMG 18251) (Lactobacillus fermentum).